The chain runs to 257 residues: Outer dense fiber protein 4 (257 aa).

A disordered region spans residues 1–41; that stretch reads MDAEYSGNEFPRSEGERDQHQRPGKERKSGEAGWGTGELGQ. Positions 11–30 are enriched in basic and acidic residues; the sequence is PRSEGERDQHQRPGKERKSG. Phosphoserine is present on Ser64. Transmembrane regions (helical) follow at residues 80–100, 152–172, and 179–199; these read AQVL…VVAF, VTFI…FELE, and IGWS…CAIL.

In terms of tissue distribution, expressed in testis and sperm; especially localized to sperm tail (at protein level).

Its subcellular location is the membrane. In terms of biological role, component of the outer dense fibers (ODF) of spermatozoa which could be involved in sperm tail structure, sperm movement and general organization of cellular cytoskeleton. This Homo sapiens (Human) protein is Outer dense fiber protein 4 (ODF4).